Here is a 384-residue protein sequence, read N- to C-terminus: S-adenosylmethionine synthase (384 aa).

His15 serves as a coordination point for ATP. Asp17 lines the Mg(2+) pocket. Glu43 contacts K(+). L-methionine-binding residues include Glu56 and Gln99. The segment at 99 to 109 is flexible loop; sequence QSPDINQGVDR. Residues 164 to 166, 230 to 231, Asp239, 245 to 246, Ala262, and Lys266 contribute to the ATP site; these read DAK, RF, and RK. An L-methionine-binding site is contributed by Asp239. Lys270 lines the L-methionine pocket.

This sequence belongs to the AdoMet synthase family. Homotetramer; dimer of dimers. The cofactor is Mg(2+). Requires K(+) as cofactor.

It localises to the cytoplasm. It catalyses the reaction L-methionine + ATP + H2O = S-adenosyl-L-methionine + phosphate + diphosphate. The protein operates within amino-acid biosynthesis; S-adenosyl-L-methionine biosynthesis; S-adenosyl-L-methionine from L-methionine: step 1/1. In terms of biological role, catalyzes the formation of S-adenosylmethionine (AdoMet) from methionine and ATP. The overall synthetic reaction is composed of two sequential steps, AdoMet formation and the subsequent tripolyphosphate hydrolysis which occurs prior to release of AdoMet from the enzyme. This chain is S-adenosylmethionine synthase, found in Yersinia pseudotuberculosis serotype IB (strain PB1/+).